Consider the following 572-residue polypeptide: MADEIVPPATQLAAVSLENDGSTVQRAQFSNRVLIRTILDRPDGGAGLAGQTVRIGGWVKSGRDQGKRTFSFLAVNDGSCPANLQVMVDPSLYDVSNLVATGTCVTVDGVLKVPPKGKGTQQQIELNVVKVIDVGTVDASKYPLPKTKLTLETLRDVLHLRSRTNSISAVARIRNALAFATHSFFQEHSFLYIHTPIITTSDCEGAGEMFQATTLINYTERLEQDLIDNPPPTEADVEAARLIVIERGNVVAELKAAKASKEAITAAVAELKIAKETFAHIDERSRLRPGLPKKDGNIDYSKDFFGRQAFLTVSGQLQVETYACALSNVYTFGPTFRAENSHTSRHLAEFWMVEPEIAFADLEDDMNCAEAYVKYMCNWLLEKCYADMELMAKNFDSGCIDRLKLVASTPFGRITYTKAIELLEEAVAKGKEFDNNVEWGIDLASEHERYLTEVLFQKPLIVYNYPKGIKAFYMRLNDDEKTVAAMDVLVPKVGELIGGSQREERYDVIKKRIEEMGLPIEPYEWYLDLRRYGTVKHCGFGLGFERMILFATGLDNIRDVIPFPRYPGKADL.

Alanine 2 bears the N-acetylalanine mark. The segment at residues 53-131 is a DNA-binding region (OB); it reads VRIGGWVKSG…QQIELNVVKV (79 aa). Residues 236–292 enclose the WHEP-TRS domain; it reads DVEAARLIVIERGNVVAELKAAKASKEAITAAVAELKIAKETFAHIDERSRLRPGLP.

The protein belongs to the class-II aminoacyl-tRNA synthetase family.

The protein localises to the cytoplasm. It is found in the cytosol. It catalyses the reaction tRNA(Asn) + L-asparagine + ATP = L-asparaginyl-tRNA(Asn) + AMP + diphosphate + H(+). The polypeptide is Asparagine--tRNA ligase, cytoplasmic 1 (Arabidopsis thaliana (Mouse-ear cress)).